The following is a 111-amino-acid chain: Large ribosomal subunit protein uL22 (111 aa).

Belongs to the universal ribosomal protein uL22 family. In terms of assembly, part of the 50S ribosomal subunit.

Functionally, this protein binds specifically to 23S rRNA; its binding is stimulated by other ribosomal proteins, e.g. L4, L17, and L20. It is important during the early stages of 50S assembly. It makes multiple contacts with different domains of the 23S rRNA in the assembled 50S subunit and ribosome. Its function is as follows. The globular domain of the protein is located near the polypeptide exit tunnel on the outside of the subunit, while an extended beta-hairpin is found that lines the wall of the exit tunnel in the center of the 70S ribosome. The protein is Large ribosomal subunit protein uL22 of Chlamydia muridarum (strain MoPn / Nigg).